Consider the following 474-residue polypeptide: MSRLVVVSNRIAPPDEHAASAGGLAVGILGALKAAGGLWFGWSGETGNEDQPLKKVKKGNITWASFNLSEQDLDEYYNQFSNAVLWPAFHYRLDLVQFQRPAWDGYLRVNALLADKLLPLLQDDDIIWIHDYHLLPFAHELRKRGVNNRIGFLLHIPFPTPEIFNALPTYDTLLEQLCDYDLLGFQTENDRLAFLDCLSNLTRVTTRSAKSHTAWGKAFRTEVYPIGIEPKEIAKQAAGPLPPKLAQLKAELKNVQNIFSVERLDYSKGLPERFLAYEALLEKYPQHHGKIRYTQIAPTSRGDVQAYQDIRHQLENEAGRINGKYGQLGWTPLYYLNQHFDRKLLMKIFRYSDVGLVTPLRDGMNLVAKEYVAAQDPANPGVLVLSQFAGAANELTSALIVNPYDRDEVAAALDRALTMSLAERISRHAEMLDVIVKNDINHWQECFISDLKQIVPRSAESQQRDKVATFPKLA.

Residue Arg10 coordinates D-glucose 6-phosphate. A UDP-alpha-D-glucose-binding site is contributed by 22 to 23 (GG). 2 residues coordinate D-glucose 6-phosphate: Tyr77 and Asp131. Arg263 and Lys268 together coordinate UDP-alpha-D-glucose. Residue Arg301 coordinates D-glucose 6-phosphate. UDP-alpha-D-glucose contacts are provided by residues Phe340 and 366–370 (LVAKE).

The protein belongs to the glycosyltransferase 20 family. In terms of assembly, homotetramer.

It catalyses the reaction D-glucose 6-phosphate + UDP-alpha-D-glucose = alpha,alpha-trehalose 6-phosphate + UDP + H(+). Its pathway is glycan biosynthesis; trehalose biosynthesis. In terms of biological role, probably involved in the osmoprotection via the biosynthesis of trehalose. Catalyzes the transfer of glucose from UDP-alpha-D-glucose (UDP-Glc) to D-glucose 6-phosphate (Glc-6-P) to form trehalose-6-phosphate. Acts with retention of the anomeric configuration of the UDP-sugar donor. The sequence is that of Trehalose-6-phosphate synthase from Pseudomonas savastanoi (Pseudomonas syringae pv. savastanoi).